The primary structure comprises 355 residues: Inner membrane protein YghQ (355 aa).

The Periplasmic portion of the chain corresponds to 1–37 (MAGFNIKHWFADGAFRTIIRNSAWLGSSNVVSALLGL). Residues 38 to 58 (LALSCAGKGMTPAMFGVLVIV) form a helical membrane-spanning segment. The Cytoplasmic segment spans residues 59–100 (QSYAKSISDFIKFQTWQLVVQYGTPALTNNNPQQFRNVVSFS). The chain crosses the membrane as a helical span at residues 101–121 (FSLDIVSGAVAIVGGIALLPF). Residues 122 to 134 (LSHSLGLDDQSFW) lie on the Periplasmic side of the membrane. Residues 135 to 155 (LAALYCTLIPSMASSTPTGIL) form a helical membrane-spanning segment. The Cytoplasmic portion of the chain corresponds to 156–177 (RAVDRFDLIAVQQATKPFLRAA). A helical transmembrane segment spans residues 178 to 198 (GSVVAWYFDFGFAGFVIAWYV). The Periplasmic portion of the chain corresponds to 199 to 261 (SNLVGGTMYW…WSARNSCSTV (63 aa)). The chain crosses the membrane as a helical span at residues 262-282 (LVGIVLGPAAAGLFKIAMTFF). At 283–323 (DAAGTPAGLLGKSFYPEVMRLDPRTTRPWLLGVKSGLLAGG) the chain is on the cytoplasmic side. Residues 324–344 (IGILVALAVLIVGKPLISLVF) form a helical membrane-spanning segment. Over 345–355 (GVKYLEAYDLI) the chain is Periplasmic.

The protein resides in the cell inner membrane. This chain is Inner membrane protein YghQ (yghQ), found in Escherichia coli (strain K12).